Reading from the N-terminus, the 65-residue chain is Large ribosomal subunit protein bL35 (65 aa).

This sequence belongs to the bacterial ribosomal protein bL35 family.

In Geobacter sp. (strain M21), this protein is Large ribosomal subunit protein bL35.